The sequence spans 799 residues: Phosphate transporter PHO1-1 (799 aa).

Over 1–406 the chain is Cytoplasmic; that stretch reads MVKFSKQFEG…TQRKESHTVT (406 aa). The 353-residue stretch at 2–354 folds into the SPX domain; sequence VKFSKQFEGQ…GKQVLSVYLR (353 aa). Residues 170-243 form a disordered region; the sequence is SLSGHHRAAA…GSLSRQSLGR (74 aa). A compositionally biased stretch (low complexity) spans 180 to 193; it reads GDDPSISSSSATSG. Residues 210–222 are compositionally biased toward basic and acidic residues; sequence ESQHETAVMRDPE. Residues 234-243 show a composition bias toward polar residues; it reads GSLSRQSLGR. The chain crosses the membrane as a helical span at residues 407 to 427; sequence FFIGLMTGCFVALFLGYCIMA. Topologically, residues 428-447 are extracellular; the sequence is HIAGMYTQRRDSIYMETVYP. The helical transmembrane segment at 448-468 threads the bilayer; it reads VFSMFSLMFLHLFMYGCNMVA. Residues 469–492 are Cytoplasmic-facing; that stretch reads WRKARINYSFIFEFAAGRELKYRD. The helical transmembrane segment at 493–513 threads the bilayer; sequence VFLVCTASMAVIVGVMFAHLS. Residues 514 to 522 lie on the Extracellular side of the membrane; sequence LAVRGFHAQ. Residues 523–543 traverse the membrane as a helical segment; that stretch reads AIPGFLLLGFLLLLFCPFNMV. Over 544–672 the chain is Cytoplasmic; that stretch reads YRSTRFQFLR…AYEKDRSLGS (129 aa). In terms of domain architecture, EXS spans 608–799; that stretch reads INTKHIRDLA…LPFHEADEED (192 aa). Residues 673–693 traverse the membrane as a helical segment; it reads LSLLVIVSSSATMYQLYWDFV. Over 694–718 the chain is Extracellular; sequence KDWGLLQPNSKNPWLRNDLILKSKS. The chain crosses the membrane as a helical span at residues 719–739; the sequence is IYYLSMGLNLVLRLAWLQTVI. Residues 740-799 lie on the Cytoplasmic side of the membrane; the sequence is HPNFGSLDSRVTSFFLAALEVIRRGHWNFYRLENEHLNNAGKFRAVKTVPLPFHEADEED.

The protein belongs to the SYG1 (TC 2.A.94) family. Expressed in roots and flowers.

The protein localises to the cell membrane. Functionally, may transport inorganic phosphate (Pi). In Oryza sativa subsp. japonica (Rice), this protein is Phosphate transporter PHO1-1 (PHO1-1).